Reading from the N-terminus, the 467-residue chain is Ammonium transporter Rh type C (467 aa).

Residues 1-9 (MAWNTNLRW) lie on the Cytoplasmic side of the membrane. Residues 10–30 (RLPLLCLVLEVAMVVLFGLFV) traverse the membrane as a helical segment. Topologically, residues 31-61 (RYSPDADSSWSNEKRKGNITSDLENEFYYRY) are extracellular. N-linked (GlcNAc...) asparagine glycosylation occurs at N48. The helical transmembrane segment at 62–82 (PSFQDVHVMVFLGFGFLMTFL) threads the bilayer. Residues 83-86 (QRYG) are Cytoplasmic-facing. The helical transmembrane segment at 87-107 (YCALGFNFLLAALGVQWALLM) threads the bilayer. The Extracellular portion of the chain corresponds to 108 to 131 (QGWFQYTKDRLILLGIKNLIDADS). 2 consecutive transmembrane segments (helical) span residues 132-152 (CVAS…PVQM) and 153-173 (LLMT…LLHV). Residues 174-179 (LEVKDA) lie on the Extracellular side of the membrane. Residues 180–200 (GGSITIHIFGAYFGLTVTWIL) traverse the membrane as a helical segment. The Cytoplasmic portion of the chain corresponds to 201–219 (YRHNLDHSRERQSSVYHSN). The chain crosses the membrane as a helical span at residues 220–240 (LFAMIGTLFLWIYWPSFNSAM). Residues 241 to 251 (SNYGDAQHRAA) are Extracellular-facing. A helical transmembrane segment spans residues 252 to 272 (INTYCSLAASVLTSVAMSSVL). Topologically, residues 273 to 282 (HKKGKLDMVH) are cytoplasmic. The chain crosses the membrane as a helical span at residues 283–303 (IQNATLAGGVGVGTAAEMMLM). Residue P304 is a topological domain, extracellular. Residues 305–325 (YGALIVGFICGAVSTLGFVYL) form a helical membrane-spanning segment. Topologically, residues 326-343 (TPFLESRLRIQDTCGIHN) are cytoplasmic. A helical membrane pass occupies residues 344 to 364 (LHGIPGLIGAIVGAVTAAYAS). The Extracellular portion of the chain corresponds to 365 to 391 (PDGDRGFVYPFGFHNEKDEKVQGRFQA). A helical transmembrane segment spans residues 392-412 (FGLLLTLAIAMVGGTIMGLIL). Residues 413-467 (KLPFWGQAMDEDCFDDSIYWEMHEEKSSSPEDHTHKPSVPTEPVEQPTSSATLAP) are Cytoplasmic-facing. Over residues 436–447 (EEKSSSPEDHTH) the composition is skewed to basic and acidic residues. A disordered region spans residues 436 to 467 (EEKSSSPEDHTHKPSVPTEPVEQPTSSATLAP). Residues 458 to 467 (QPTSSATLAP) show a composition bias toward polar residues.

It belongs to the ammonium transporter (TC 2.A.49) family. Rh subfamily. As to quaternary structure, homotrimer. N-glycosylated.

The protein localises to the cell membrane. The protein resides in the apical cell membrane. It catalyses the reaction NH4(+)(in) = NH4(+)(out). It carries out the reaction methylamine(out) = methylamine(in). The enzyme catalyses CO2(out) = CO2(in). In terms of biological role, ammonium transporter involved in the maintenance of acid-base homeostasis. Transports ammonium and its related derivative methylammonium across the plasma membrane of epithelial cells likely contributing to renal transepithelial ammonia transport and ammonia metabolism. Postulated to primarily mediate an electroneutral bidirectional transport of NH3 ammonia species according to a mechanism that implies interaction of an NH4(+) ion with acidic residues of the pore entry followed by dissociation of NH4(+) into NH3 and H(+). As a result NH3 transits through the central pore and is protonated on the extracellular side reforming NH4(+). May act as a CO2 channel providing for renal acid secretion. This Oryctolagus cuniculus (Rabbit) protein is Ammonium transporter Rh type C (RHCG).